A 1010-amino-acid polypeptide reads, in one-letter code: 2-oxoglutarate dehydrogenase-like, mitochondrial (1010 aa).

The transit peptide at 1–107 (MSQLRLLLFR…RASVSSCTKT (107 aa)) directs the protein to the mitochondrion. The disordered stretch occupies residues 28–47 (GGRRRSSGPPTTIPRSRGGV). Positions 130, 143, and 145 each coordinate Ca(2+). 5 residues coordinate thiamine diphosphate: Arg299, Asp398, Asn431, Ile433, and Gln663. Asp398, Asn431, and Ile433 together coordinate Mg(2+).

This sequence belongs to the alpha-ketoglutarate dehydrogenase family. In terms of assembly, the OGDHC complex comprises multiple copies of three catalytic enzyme components, the 2-oxoglutarate dehydrogenase (OGDH/E1), the dihydrolipoamide dehydrogenase (DLST/E2) and the dihydrolipoamide dehydrogenase (DLD/E3). OGDHL/E1-like isoenzyme may replace OGDH in the OGDHC complex in the brain. The presence of either ODGH/E1 or ODGHL/E1-like isoenzyme in the complex may depend on its tissular distribution. Thiamine diphosphate serves as cofactor. It depends on Mg(2+) as a cofactor. As to expression, the OGDHL-containing OGDHC complex is present in the brain, but not in the heart.

It localises to the mitochondrion matrix. The enzyme catalyses N(6)-[(R)-lipoyl]-L-lysyl-[protein] + 2-oxoglutarate + H(+) = N(6)-[(R)-S(8)-succinyldihydrolipoyl]-L-lysyl-[protein] + CO2. Its function is as follows. 2-oxoglutarate dehydrogenase (E1-like) component of the 2-oxoglutarate dehydrogenase multienzyme complex (OGDHC) which mediates the decarboxylation of alpha-ketoglutarate in the tricarboxylic acid cycle. The OGDHC complex catalyzes the overall conversion of 2-oxoglutarate to succinyl-CoA and CO(2) while reducing NAD(+) to NADH. The OGDHC complex is mainly active in the mitochondrion. Involved in the inhibition of cell proliferation and in apoptosis. This is 2-oxoglutarate dehydrogenase-like, mitochondrial from Rattus norvegicus (Rat).